We begin with the raw amino-acid sequence, 346 residues long: Uricase (346 aa).

Residues 1–23 (MFATPLRQPTNASGARPAVSMDG) form a disordered region. Active-site charge relay system residues include K39 and T84. Urate-binding residues include T84, D85, F208, R225, V273, Q274, and N300. The active-site Charge relay system is H302. The Microbody targeting signal signature appears at 344-346 (SHL).

This sequence belongs to the uricase family. Malpighian tubules.

It localises to the peroxisome. The enzyme catalyses urate + O2 + H2O = 5-hydroxyisourate + H2O2. It functions in the pathway purine metabolism; urate degradation; (S)-allantoin from urate: step 1/3. Its activity is regulated as follows. Repressed by 20-hydroxyecdysone. In terms of biological role, catalyzes the oxidation of uric acid to 5-hydroxyisourate, which is further processed to form (S)-allantoin. This chain is Uricase (Uro), found in Drosophila pseudoobscura pseudoobscura (Fruit fly).